We begin with the raw amino-acid sequence, 525 residues long: GMP synthase [glutamine-hydrolyzing] (525 aa).

Residues 9 to 207 (RILILDFGSQ…VRDICQCEAL (199 aa)) form the Glutamine amidotransferase type-1 domain. The active-site Nucleophile is the Cys86. Active-site residues include His181 and Glu183. The 193-residue stretch at 208-400 (WTPAKIIDDA…LGLPYDMLYR (193 aa)) folds into the GMPS ATP-PPase domain. 235–241 (SGGVDSS) is a binding site for ATP.

As to quaternary structure, homodimer.

It carries out the reaction XMP + L-glutamine + ATP + H2O = GMP + L-glutamate + AMP + diphosphate + 2 H(+). It participates in purine metabolism; GMP biosynthesis; GMP from XMP (L-Gln route): step 1/1. Catalyzes the synthesis of GMP from XMP. In Salmonella typhimurium (strain LT2 / SGSC1412 / ATCC 700720), this protein is GMP synthase [glutamine-hydrolyzing].